A 421-amino-acid chain; its full sequence is UDP-N-acetylglucosamine 1-carboxyvinyltransferase (421 aa).

22-23 (KN) is a binding site for phosphoenolpyruvate. Position 93 (Arg-93) interacts with UDP-N-acetyl-alpha-D-glucosamine. The active-site Proton donor is Cys-117. Residue Cys-117 is modified to 2-(S-cysteinyl)pyruvic acid O-phosphothioketal. Residues 122 to 126 (RPVDL), Asp-308, and Ile-330 each bind UDP-N-acetyl-alpha-D-glucosamine.

The protein belongs to the EPSP synthase family. MurA subfamily.

The protein localises to the cytoplasm. It catalyses the reaction phosphoenolpyruvate + UDP-N-acetyl-alpha-D-glucosamine = UDP-N-acetyl-3-O-(1-carboxyvinyl)-alpha-D-glucosamine + phosphate. The protein operates within cell wall biogenesis; peptidoglycan biosynthesis. In terms of biological role, cell wall formation. Adds enolpyruvyl to UDP-N-acetylglucosamine. The protein is UDP-N-acetylglucosamine 1-carboxyvinyltransferase of Pseudomonas savastanoi pv. phaseolicola (strain 1448A / Race 6) (Pseudomonas syringae pv. phaseolicola (strain 1448A / Race 6)).